A 261-amino-acid chain; its full sequence is 3-deoxy-manno-octulosonate cytidylyltransferase (261 aa).

This sequence belongs to the KdsB family.

It is found in the cytoplasm. The catalysed reaction is 3-deoxy-alpha-D-manno-oct-2-ulosonate + CTP = CMP-3-deoxy-beta-D-manno-octulosonate + diphosphate. The protein operates within nucleotide-sugar biosynthesis; CMP-3-deoxy-D-manno-octulosonate biosynthesis; CMP-3-deoxy-D-manno-octulosonate from 3-deoxy-D-manno-octulosonate and CTP: step 1/1. It participates in bacterial outer membrane biogenesis; lipopolysaccharide biosynthesis. Functionally, activates KDO (a required 8-carbon sugar) for incorporation into bacterial lipopolysaccharide in Gram-negative bacteria. The polypeptide is 3-deoxy-manno-octulosonate cytidylyltransferase (Dechloromonas aromatica (strain RCB)).